The sequence spans 319 residues: Ribosomal RNA small subunit methyltransferase H (319 aa).

S-adenosyl-L-methionine-binding positions include 34-36 (GGH), Asp54, Phe83, Asp104, and Gln111.

Belongs to the methyltransferase superfamily. RsmH family.

The protein localises to the cytoplasm. It carries out the reaction cytidine(1402) in 16S rRNA + S-adenosyl-L-methionine = N(4)-methylcytidine(1402) in 16S rRNA + S-adenosyl-L-homocysteine + H(+). Its function is as follows. Specifically methylates the N4 position of cytidine in position 1402 (C1402) of 16S rRNA. The sequence is that of Ribosomal RNA small subunit methyltransferase H from Lactiplantibacillus plantarum (strain ATCC BAA-793 / NCIMB 8826 / WCFS1) (Lactobacillus plantarum).